We begin with the raw amino-acid sequence, 652 residues long: DNA polymerase epsilon subunit B (652 aa).

The protein belongs to the DNA polymerase epsilon subunit B family. Heterotetramer. Consists of four subunits: POL2, DPB2, DPB3 and DPB4.

The protein resides in the nucleus. Functionally, as accessory component of the DNA polymerase epsilon (DNA polymerase II) participates in chromosomal DNA replication. This Yarrowia lipolytica (strain CLIB 122 / E 150) (Yeast) protein is DNA polymerase epsilon subunit B (DPB2).